Consider the following 289-residue polypeptide: 5'-3' exonuclease (289 aa).

Residues 166-256 (VEPQKIPDYL…EEDLKIKRPD (91 aa)) form the 5'-3' exonuclease domain.

Functionally, 5'-3' exonuclease acting preferentially on double-stranded DNA. The chain is 5'-3' exonuclease from Aquifex aeolicus (strain VF5).